The chain runs to 265 residues: Small ribosomal subunit protein uS3 (265 aa).

In terms of domain architecture, KH type-2 spans 39–107 (VRDFLKKKLK…PVHVNIEEIR (69 aa)). The segment at 211–265 (NDAPVVEEPQDDRRRRPGRPEGRRREGEGRPGGNRRGGAGAGRRAAPGADAKSGE) is disordered. Residues 221–239 (DDRRRRPGRPEGRRREGEG) show a composition bias toward basic and acidic residues. Positions 240–251 (RPGGNRRGGAGA) are enriched in gly residues.

The protein belongs to the universal ribosomal protein uS3 family. As to quaternary structure, part of the 30S ribosomal subunit. Forms a tight complex with proteins S10 and S14.

Functionally, binds the lower part of the 30S subunit head. Binds mRNA in the 70S ribosome, positioning it for translation. This chain is Small ribosomal subunit protein uS3, found in Cupriavidus necator (strain ATCC 17699 / DSM 428 / KCTC 22496 / NCIMB 10442 / H16 / Stanier 337) (Ralstonia eutropha).